The chain runs to 120 residues: Cytochrome c6 (120 aa).

Positions 1–35 are cleaved as a signal peptide; it reads MFKLFNQASRIFFGIALPCLIFLGGIFSLGNTALA. The heme c site is built by cysteine 49, cysteine 52, histidine 53, and methionine 93.

It belongs to the cytochrome c family. PetJ subfamily. Monomer. Binds 1 heme c group covalently per subunit.

The protein resides in the cellular thylakoid lumen. In terms of biological role, functions as an electron carrier between membrane-bound cytochrome b6-f and photosystem I in oxygenic photosynthesis. The chain is Cytochrome c6 (petJ) from Synechocystis sp. (strain ATCC 27184 / PCC 6803 / Kazusa).